A 633-amino-acid chain; its full sequence is Probable sodium/potassium/calcium exchanger CG1090 (633 aa).

An N-terminal signal peptide occupies residues 1 to 21 (MWNMGLLFLIYYCVSIYSAKG). The Extracellular segment spans residues 22–111 (DTKDGQVLPL…PLMNKWARQH (90 aa)). A helical membrane pass occupies residues 112 to 132 (GGLILHILVAVFTFFGLAIVC). Topologically, residues 133–157 (DEYFVASLDRLCEELKLSPDVAGAT) are cytoplasmic. Residues 153–193 (VAGATFMAAGSSAPELATVVIGVFFAKDDIGISGVIGSAVF) form an Alpha-1 repeat. A helical transmembrane segment spans residues 158–178 (FMAAGSSAPELATVVIGVFFA). The Extracellular portion of the chain corresponds to 179–181 (KDD). A helical membrane pass occupies residues 182–202 (IGISGVIGSAVFNIMFVISVC). Topologically, residues 203–220 (ALCSGTVCQLNWWPLVRD) are cytoplasmic. Transmembrane regions (helical) follow at residues 221–241 (CFFYCVSILVMLIIIFNDVIS) and 242–262 (CFESVVMLLCYVGYCVALHFN). Topologically, residues 263 to 427 (TELERWALGL…EPRRDPLLRP (165 aa)) are extracellular. Polar residues-rich tracts occupy residues 298-310 (YTQESVGQTQGQK), 320-333 (AKPQSDYQDYSDPN), and 395-405 (QVVSTQATSAG). Positions 298 to 422 (YTQESVGQTQ…TDKQREPRRD (125 aa)) are disordered. The span at 411 to 422 (KSTDKQREPRRD) shows a compositional bias: basic and acidic residues. A helical membrane pass occupies residues 428 to 448 (MEGGLPALVSWYVVYPIHFLC). The Cytoplasmic segment spans residues 449-468 (KKTMPDCRQEQYRNWYPFTF). A helical membrane pass occupies residues 469 to 489 (LMSMVWISFYSYFMVWMITVI). Residues 490–500 (GSTLAIPDTVM) lie on the Extracellular side of the membrane. A helical membrane pass occupies residues 501-521 (GLTFVAAGVSVPDALSSIAVI). The stretch at 506–537 (AAGVSVPDALSSIAVIKEGFGDMAVSNAIGSN) is one Alpha-2 repeat. Over 522-535 (KEGFGDMAVSNAIG) the chain is Cytoplasmic. Residues 536-556 (SNVFDILVCLGLPWFIQTAII) form a helical membrane-spanning segment. The Extracellular portion of the chain corresponds to 557–568 (KPGSHVNVISKG). Residues 569 to 589 (LAYSTLSLFSTVVFLILSTHL) form a helical membrane-spanning segment. At 590–597 (NGWKLDKR) the chain is on the cytoplasmic side. The helical transmembrane segment at 598 to 618 (LGIILMVWYLFFITLASLYEL) threads the bilayer. The Extracellular segment spans residues 619 to 633 (NVFGYMNPPECPSTY).

The protein belongs to the Ca(2+):cation antiporter (CaCA) (TC 2.A.19) family. SLC24A subfamily.

It localises to the membrane. May function in the removal and maintenance of calcium homeostasis. Transports one Ca(2+) and 1 K(+) in exchange for 4 Na(+). In Drosophila melanogaster (Fruit fly), this protein is Probable sodium/potassium/calcium exchanger CG1090.